A 353-amino-acid polypeptide reads, in one-letter code: MAVAENAGVKVDSSGQNLDNNNTAASATETTKPPCPDDDQSPKSDSSTPLTIDSTPETDDRINETAQKVQTLNGFSGNGERDNNGEIKDLADAFSKLNPMAQEFVPPSLARSQSGVLRNGLGFTNNFAAPPKLADGNDHFPRRRRSFGQGKRRMNKRTSLAQKDDVIRRTVYVSDIDQQVTEENLAGVFINCGQVVDCRVCGDPNSVLRFAFIEFTNEEGARAALSMSGTVLGFYPLKVLPSKTAIAPVNPTFLPRSEDEREMCVRTVYCTNIDKRITQIDLKGFFEMLCGEVHRLRLGDYHHQTRIAFVEFAMAESAIAALHCSGIVLGALPIRVSPSKTPVRPHFPRAEFK.

The interval 1 to 61 (MAVAENAGVK…IDSTPETDDR (61 aa)) is disordered. Residues 20–31 (NNNTAASATETT) are compositionally biased toward low complexity. Residues 96–106 (KLNPMAQEFVP) carry the PAM2-like motif. The interval 128 to 159 (AAPPKLADGNDHFPRRRRSFGQGKRRMNKRTS) is disordered. Residues 141-156 (PRRRRSFGQGKRRMNK) show a composition bias toward basic residues. The short motif at 142 to 153 (RRRRSFGQGKRR) is the Bipartite nuclear localization signal element. 2 consecutive RRM domains span residues 169 to 244 (RTVY…PSKT) and 266 to 341 (RTVY…PSKT).

As to expression, expressed in cauline leaves, stems, rosette leaves, immature siliques and primary inflorescences.

Its subcellular location is the nucleus. In Arabidopsis thaliana (Mouse-ear cress), this protein is Polyadenylate-binding protein-interacting protein 10 (CID10).